We begin with the raw amino-acid sequence, 239 residues long: Tetraspanin-9 (239 aa).

At 1–12 (MARGCLCCVKYM) the chain is on the cytoplasmic side. The chain crosses the membrane as a helical span at residues 13–33 (LFLFNLLFWLGGCGLLGVGVW). Residues 34–55 (LSVSQGSFATLSPSFPSISAAN) are Extracellular-facing. Residues 56 to 76 (LIITLGAVIMVTGFLGCLGAI) form a helical membrane-spanning segment. The Cytoplasmic segment spans residues 77 to 85 (KENKCLLLS). The helical transmembrane segment at 86–106 (FFITLLVILLAELILLILFFV) threads the bilayer. The Extracellular portion of the chain corresponds to 107 to 203 (YTDNVSENAR…VEEWLDDNKH (97 aa)). N-linked (GlcNAc...) asparagine glycans are attached at residues Asn-110 and Asn-180. A helical transmembrane segment spans residues 204-224 (LLGTIAMCVLVIQLLGMAFSM). The Cytoplasmic segment spans residues 225 to 239 (TLYQQIHRSGKKYEA).

It belongs to the tetraspanin (TM4SF) family.

The protein resides in the membrane. In Salmo salar (Atlantic salmon), this protein is Tetraspanin-9 (tspan9).